The sequence spans 360 residues: Complement control protein homolog (360 aa).

An N-terminal signal peptide occupies residues 1-20 (MYTLHYICLVLSCVIYFVWT). Sushi domains lie at 21-81 (LSCP…KCQK), 82-144 (KKCS…ICDI), 145-207 (KKCK…KCEF), and 208-266 (IFCK…ECMK). 8 disulfides stabilise this stretch: Cys-23–Cys-68, Cys-54–Cys-79, Cys-84–Cys-125, Cys-111–Cys-142, Cys-147–Cys-191, Cys-175–Cys-205, Cys-210–Cys-252, and Cys-238–Cys-264. 4 N-linked (GlcNAc...) asparagine; by host glycosylation sites follow: Asn-36, Asn-39, Asn-46, and Asn-72. Residue Asn-155 is glycosylated (N-linked (GlcNAc...) asparagine; by host). The N-linked (GlcNAc...) asparagine; by host glycan is linked to Asn-294. A helical transmembrane segment spans residues 328-350 (GVLVIILTTSFIIIGIILTGVCL).

This sequence belongs to the receptors of complement activation (RCA) family.

The protein localises to the membrane. The protein resides in the secreted. This Saimiriine herpesvirus 2 (strain 11) (SaHV-2) protein is Complement control protein homolog (4).